The following is a 350-amino-acid chain: tRNA pseudouridine synthase D (350 aa).

The active-site Nucleophile is aspartate 79. One can recognise a TRUD domain in the interval 154-306; sequence GAPNYYGPQR…EQERRPIVLY (153 aa).

The protein belongs to the pseudouridine synthase TruD family.

The enzyme catalyses uridine(13) in tRNA = pseudouridine(13) in tRNA. Responsible for synthesis of pseudouridine from uracil-13 in transfer RNAs. The polypeptide is tRNA pseudouridine synthase D (Pseudoalteromonas atlantica (strain T6c / ATCC BAA-1087)).